Reading from the N-terminus, the 92-residue chain is UPF0298 protein ABC2380 (92 aa).

The protein belongs to the UPF0298 family.

It is found in the cytoplasm. This Shouchella clausii (strain KSM-K16) (Alkalihalobacillus clausii) protein is UPF0298 protein ABC2380.